Here is a 449-residue protein sequence, read N- to C-terminus: Probable glycosyltransferase 5 (449 aa).

Positions 1-14 (MMEKHGGKVTSDRR) are enriched in basic and acidic residues. Residues 1-24 (MMEKHGGKVTSDRRAGRRQHGQRC) are disordered. Residues 1 to 28 (MMEKHGGKVTSDRRAGRRQHGQRCSASD) lie on the Cytoplasmic side of the membrane. A helical; Signal-anchor for type II membrane protein membrane pass occupies residues 29-49 (AAPLVVVVILIVGALFLILGP). At 50 to 449 (TGSSSFTVPR…HPTFRAARPT (400 aa)) the chain is on the lumenal side. The tract at residues 74 to 109 (APPPPPPPAQMQAGANASSEEDSGLPPPRQLTDPPY) is disordered. N-linked (GlcNAc...) asparagine glycosylation is found at asparagine 89, asparagine 413, and asparagine 422.

This sequence belongs to the glycosyltransferase 34 family.

It localises to the golgi apparatus membrane. Functionally, probable glycosyltransferase that may be involved in the biosynthesis of xyloglucan. This Oryza sativa subsp. indica (Rice) protein is Probable glycosyltransferase 5.